The primary structure comprises 182 residues: Nucleoid-associated protein At2g24020, chloroplastic (182 aa).

A chloroplast-targeting transit peptide spans 1 to 48 (MASMAATTNFTKSMLFPFSHVSGNASLNSQRRTWPKQYKSKNGYRSLR).

Belongs to the YbaB/EbfC family. Homodimer. Interacts with ALB3 and ALB4.

Its subcellular location is the plastid. The protein localises to the chloroplast stroma. Functionally, participates with ALB4 in thylakoid protein targeting. May function with specific subset of thylakoidal proteins. Binds to DNA and alters its conformation. May be involved in regulation of gene expression, nucleoid organization and DNA protection. This chain is Nucleoid-associated protein At2g24020, chloroplastic, found in Arabidopsis thaliana (Mouse-ear cress).